Here is a 435-residue protein sequence, read N- to C-terminus: Casein kinase I homolog 2 (435 aa).

Residues Y12–L282 form the Protein kinase domain. Residues I18 to I26 and K41 each bind ATP. D131 acts as the Proton acceptor in catalysis. At S361 the chain carries Phosphoserine.

Belongs to the protein kinase superfamily. CK1 Ser/Thr protein kinase family. Casein kinase I subfamily.

The protein localises to the cytoplasm. It catalyses the reaction L-seryl-[protein] + ATP = O-phospho-L-seryl-[protein] + ADP + H(+). The catalysed reaction is L-threonyl-[protein] + ATP = O-phospho-L-threonyl-[protein] + ADP + H(+). Casein kinases are operationally defined by their preferential utilization of acidic proteins such as caseins as substrates. May contribute to the regulation of morphology. This is Casein kinase I homolog 2 (cki2) from Schizosaccharomyces pombe (strain 972 / ATCC 24843) (Fission yeast).